A 413-amino-acid polypeptide reads, in one-letter code: Glucose-1-phosphate adenylyltransferase (413 aa).

Alpha-D-glucose 1-phosphate is bound by residues Tyr-102, Gly-167, 182-183 (EK), and Ser-200.

It belongs to the bacterial/plant glucose-1-phosphate adenylyltransferase family. As to quaternary structure, homotetramer.

It catalyses the reaction alpha-D-glucose 1-phosphate + ATP + H(+) = ADP-alpha-D-glucose + diphosphate. It participates in glycan biosynthesis; glycogen biosynthesis. Involved in the biosynthesis of ADP-glucose, a building block required for the elongation reactions to produce glycogen. Catalyzes the reaction between ATP and alpha-D-glucose 1-phosphate (G1P) to produce pyrophosphate and ADP-Glc. This is Glucose-1-phosphate adenylyltransferase from Deinococcus geothermalis (strain DSM 11300 / CIP 105573 / AG-3a).